Here is a 225-residue protein sequence, read N- to C-terminus: Late embryogenesis abundant protein 29 (225 aa).

Disordered regions lie at residues 1–167 (MASN…GGFL) and 193–225 (TEEEDKEHYPGSTTTTTATTRTTDPTHQTYQRK). 4 stretches are compositionally biased toward basic and acidic residues: residues 28–39 (MRDKAEEGRDKT), 49–61 (KAHETAQSAKDKT), 71–83 (KAHETAQSAKEKT), and 93–119 (KAHETTQAAKEKTSQAGDKAREAKDKA). LEA 11-mer repeat repeat units lie at residues 53-63 (TAQSAKDKTSQ), 75-85 (TAQSAKEKTSQ), and 97-107 (TTQAAKEKTSQ). Residues 141–153 (TKETAQGAAQYTK) show a composition bias toward polar residues. A compositionally biased stretch (basic and acidic residues) spans 154 to 163 (ETAEAGRDKT). Residues 205 to 225 (TTTTTATTRTTDPTHQTYQRK) are compositionally biased toward low complexity.

This sequence belongs to the LEA type 4 family.

It localises to the cytoplasm. The protein localises to the cytosol. Functionally, involved dehydration tolerance. This is Late embryogenesis abundant protein 29 from Arabidopsis thaliana (Mouse-ear cress).